Here is an 87-residue protein sequence, read N- to C-terminus: Small ribosomal subunit protein bS20 (87 aa).

The disordered stretch occupies residues 1 to 22; the sequence is MANIKSQIKRIGTNKKAQERNK.

The protein belongs to the bacterial ribosomal protein bS20 family.

Binds directly to 16S ribosomal RNA. The sequence is that of Small ribosomal subunit protein bS20 from Clavibacter sepedonicus (Clavibacter michiganensis subsp. sepedonicus).